The sequence spans 83 residues: uncharacterized protein (83 aa).

Residues 58-80 (YWGYGAAYGISLGLIAGVALAGL) traverse the membrane as a helical segment.

The protein resides in the membrane. This is an uncharacterized protein from Bacillus subtilis (strain 168).